The sequence spans 615 residues: Dihydroxy-acid dehydratase (615 aa).

Asp81 lines the Mg(2+) pocket. Cys122 is a binding site for [2Fe-2S] cluster. Mg(2+) is bound by residues Asp123 and Lys124. The residue at position 124 (Lys124) is an N6-carboxylysine. A [2Fe-2S] cluster-binding site is contributed by Cys195. Glu491 serves as a coordination point for Mg(2+). The active-site Proton acceptor is the Ser517.

This sequence belongs to the IlvD/Edd family. As to quaternary structure, homodimer. Requires [2Fe-2S] cluster as cofactor. Mg(2+) is required as a cofactor.

The catalysed reaction is (2R)-2,3-dihydroxy-3-methylbutanoate = 3-methyl-2-oxobutanoate + H2O. The enzyme catalyses (2R,3R)-2,3-dihydroxy-3-methylpentanoate = (S)-3-methyl-2-oxopentanoate + H2O. The protein operates within amino-acid biosynthesis; L-isoleucine biosynthesis; L-isoleucine from 2-oxobutanoate: step 3/4. It functions in the pathway amino-acid biosynthesis; L-valine biosynthesis; L-valine from pyruvate: step 3/4. Functions in the biosynthesis of branched-chain amino acids. Catalyzes the dehydration of (2R,3R)-2,3-dihydroxy-3-methylpentanoate (2,3-dihydroxy-3-methylvalerate) into 2-oxo-3-methylpentanoate (2-oxo-3-methylvalerate) and of (2R)-2,3-dihydroxy-3-methylbutanoate (2,3-dihydroxyisovalerate) into 2-oxo-3-methylbutanoate (2-oxoisovalerate), the penultimate precursor to L-isoleucine and L-valine, respectively. The polypeptide is Dihydroxy-acid dehydratase (Shewanella halifaxensis (strain HAW-EB4)).